The primary structure comprises 434 residues: Sodium/bile acid cotransporter 5 (434 aa).

The first 18 residues, 1-18 (MSGNFFIFLLLLVTPGEA), serve as a signal peptide directing secretion. Topologically, residues 19–129 (KKSFLSFLNI…VRVFRQTDDS (111 aa)) are extracellular. Residues Asn-73 and Asn-96 are each glycosylated (N-linked (GlcNAc...) asparagine). A helical transmembrane segment spans residues 130–150 (LLQAPIHVDSSIFLLVLSMIL). Over 151–172 (LNKCAFGCKIEFQVLQTVWKRP) the chain is Cytoplasmic. The helical transmembrane segment at 173 to 193 (LPILLGVVIQFFLMPFCGFLL) threads the bilayer. The Extracellular portion of the chain corresponds to 194 to 203 (SQILGLPKAQ). The helical transmembrane segment at 204–226 (AFGFVMTCTCPGGGGGYLFALLL) threads the bilayer. The Cytoplasmic segment spans residues 227-232 (EGDVTL). A helical transmembrane segment spans residues 233–255 (AILMTCTSTSLALIMMPVNSYFY). The Extracellular portion of the chain corresponds to 256–268 (SRLLGLAGAFHVP). The helical transmembrane segment at 269 to 289 (VLKIVSTLLFILMPMSTGVII) threads the bilayer. The Cytoplasmic portion of the chain corresponds to 290–306 (KHKMPAKAICLERVVRP). Residues 307–327 (LSLTLMFVGIYLAFRMGLVFL) form a helical membrane-spanning segment. The Extracellular portion of the chain corresponds to 328–331 (RMAN). Residues 332-352 (LEVFLLGLLVPALGLLFGYSL) form a helical membrane-spanning segment. Over 353-365 (AKVYLLPLPVCKT) the chain is Cytoplasmic. A helical transmembrane segment spans residues 366–386 (VALETGMLNSFLALAIIQLSF). Residues 387-395 (SQPKAHEAS) lie on the Extracellular side of the membrane. A helical membrane pass occupies residues 396 to 416 (VAPFTVAMCSSCEMLLLLLVY). Residues 417–434 (KAKRRPSLSTEYEKTPLV) lie on the Cytoplasmic side of the membrane.

The protein belongs to the bile acid:sodium symporter (BASS) (TC 2.A.28) family.

The protein resides in the membrane. This chain is Sodium/bile acid cotransporter 5 (Slc10a5), found in Mus musculus (Mouse).